The chain runs to 340 residues: Aspartate-semialdehyde dehydrogenase (340 aa).

Residues 11 to 14 (TGEV) and 39 to 40 (RS) contribute to the NADP(+) site. Arginine 100 contacts phosphate. The active-site Acyl-thioester intermediate is the cysteine 131. Substrate is bound at residue glutamine 158. Residue 161 to 162 (SG) coordinates NADP(+). Lysine 216 contributes to the phosphate binding site. A substrate-binding site is contributed by arginine 238. Catalysis depends on histidine 245, which acts as the Proton acceptor. Asparagine 318 is a binding site for NADP(+).

This sequence belongs to the aspartate-semialdehyde dehydrogenase family. As to quaternary structure, homodimer.

It catalyses the reaction L-aspartate 4-semialdehyde + phosphate + NADP(+) = 4-phospho-L-aspartate + NADPH + H(+). It functions in the pathway amino-acid biosynthesis; L-lysine biosynthesis via DAP pathway; (S)-tetrahydrodipicolinate from L-aspartate: step 2/4. It participates in amino-acid biosynthesis; L-methionine biosynthesis via de novo pathway; L-homoserine from L-aspartate: step 2/3. Its pathway is amino-acid biosynthesis; L-threonine biosynthesis; L-threonine from L-aspartate: step 2/5. Catalyzes the NADPH-dependent formation of L-aspartate-semialdehyde (L-ASA) by the reductive dephosphorylation of L-aspartyl-4-phosphate. This is Aspartate-semialdehyde dehydrogenase from Aquifex aeolicus (strain VF5).